The chain runs to 534 residues: CTP synthase (534 aa).

Positions 1-268 (MSVKYIFVTG…AKIVCKRLGL (268 aa)) are amidoligase domain. Residue serine 14 participates in CTP binding. Residue serine 14 coordinates UTP. 15-20 (GLGKGI) contributes to the ATP binding site. Residue tyrosine 55 participates in L-glutamine binding. Aspartate 72 contacts ATP. Residues aspartate 72 and glutamate 142 each coordinate Mg(2+). CTP is bound by residues 149 to 151 (DIE), 189 to 194 (KTKPTQ), and lysine 225. UTP contacts are provided by residues 189 to 194 (KTKPTQ) and lysine 225. The Glutamine amidotransferase type-1 domain maps to 293–534 (TIGLVGKYVE…VRAAYEYKTK (242 aa)). Residue glycine 355 participates in L-glutamine binding. Catalysis depends on cysteine 382, which acts as the Nucleophile; for glutamine hydrolysis. Residues 383–386 (LGMQ), glutamate 406, and arginine 462 each bind L-glutamine. Catalysis depends on residues histidine 507 and glutamate 509.

This sequence belongs to the CTP synthase family. Homotetramer.

The catalysed reaction is UTP + L-glutamine + ATP + H2O = CTP + L-glutamate + ADP + phosphate + 2 H(+). It carries out the reaction L-glutamine + H2O = L-glutamate + NH4(+). It catalyses the reaction UTP + NH4(+) + ATP = CTP + ADP + phosphate + 2 H(+). Its pathway is pyrimidine metabolism; CTP biosynthesis via de novo pathway; CTP from UDP: step 2/2. Its activity is regulated as follows. Allosterically activated by GTP, when glutamine is the substrate; GTP has no effect on the reaction when ammonia is the substrate. The allosteric effector GTP functions by stabilizing the protein conformation that binds the tetrahedral intermediate(s) formed during glutamine hydrolysis. Inhibited by the product CTP, via allosteric rather than competitive inhibition. Catalyzes the ATP-dependent amination of UTP to CTP with either L-glutamine or ammonia as the source of nitrogen. Regulates intracellular CTP levels through interactions with the four ribonucleotide triphosphates. The chain is CTP synthase from Ruminiclostridium cellulolyticum (strain ATCC 35319 / DSM 5812 / JCM 6584 / H10) (Clostridium cellulolyticum).